The chain runs to 181 residues: Alkyl hydroperoxide reductase AhpD (181 aa).

Cysteine 131 acts as the Proton donor in catalysis. A disulfide bridge links cysteine 131 with cysteine 134. Cysteine 134 functions as the Cysteine sulfenic acid (-SOH) intermediate in the catalytic mechanism.

Belongs to the AhpD family.

It carries out the reaction N(6)-[(R)-dihydrolipoyl]-L-lysyl-[lipoyl-carrier protein] + a hydroperoxide = N(6)-[(R)-lipoyl]-L-lysyl-[lipoyl-carrier protein] + an alcohol + H2O. In terms of biological role, antioxidant protein with alkyl hydroperoxidase activity. Required for the reduction of the AhpC active site cysteine residues and for the regeneration of the AhpC enzyme activity. The chain is Alkyl hydroperoxide reductase AhpD from Rhodopseudomonas palustris (strain BisA53).